The sequence spans 391 residues: Dual-specificity RNA methyltransferase RlmN (391 aa).

Residues 1 to 20 form a disordered region; it reads MTSVVADSLTETKTDSQKPI. A compositionally biased stretch (basic and acidic residues) spans 10–20; it reads TETKTDSQKPI. E120 (proton acceptor) is an active-site residue. In terms of domain architecture, Radical SAM core spans 126 to 366; it reads DADRGTLCIS…APVRRTRGQD (241 aa). An intrachain disulfide couples C133 to C371. 3 residues coordinate [4Fe-4S] cluster: C140, C144, and C147. Residues 195–196, S227, 249–251, and N328 each bind S-adenosyl-L-methionine; these read GE and SLH. C371 functions as the S-methylcysteine intermediate in the catalytic mechanism.

Belongs to the radical SAM superfamily. RlmN family. It depends on [4Fe-4S] cluster as a cofactor.

It is found in the cytoplasm. It catalyses the reaction adenosine(2503) in 23S rRNA + 2 reduced [2Fe-2S]-[ferredoxin] + 2 S-adenosyl-L-methionine = 2-methyladenosine(2503) in 23S rRNA + 5'-deoxyadenosine + L-methionine + 2 oxidized [2Fe-2S]-[ferredoxin] + S-adenosyl-L-homocysteine. The catalysed reaction is adenosine(37) in tRNA + 2 reduced [2Fe-2S]-[ferredoxin] + 2 S-adenosyl-L-methionine = 2-methyladenosine(37) in tRNA + 5'-deoxyadenosine + L-methionine + 2 oxidized [2Fe-2S]-[ferredoxin] + S-adenosyl-L-homocysteine. Specifically methylates position 2 of adenine 2503 in 23S rRNA and position 2 of adenine 37 in tRNAs. m2A2503 modification seems to play a crucial role in the proofreading step occurring at the peptidyl transferase center and thus would serve to optimize ribosomal fidelity. This is Dual-specificity RNA methyltransferase RlmN from Zymomonas mobilis subsp. mobilis (strain ATCC 31821 / ZM4 / CP4).